The sequence spans 125 residues: Dirigent protein 22 (125 aa).

N-linked (GlcNAc...) asparagine glycans are attached at residues N8, N30, and N65.

It belongs to the plant dirigent protein family. In terms of assembly, homodimer.

The protein localises to the secreted. The protein resides in the extracellular space. It is found in the apoplast. Its function is as follows. Dirigent proteins impart stereoselectivity on the phenoxy radical-coupling reaction, yielding optically active lignans from two molecules of coniferyl alcohol in the biosynthesis of lignans, flavonolignans, and alkaloids and thus plays a central role in plant secondary metabolism. In Arabidopsis thaliana (Mouse-ear cress), this protein is Dirigent protein 22 (DIR22).